The primary structure comprises 396 residues: Purine ribonucleoside efflux pump NepI (396 aa).

Residues 1-21 (MSEFIAENRGANAITRPNWSA) are Cytoplasmic-facing. Residues 22–42 (VFSVAFCVACLIIVEFLPVSL) traverse the membrane as a helical segment. Over 43–54 (LTPMAQDLGISE) the chain is Periplasmic. A helical transmembrane segment spans residues 55 to 75 (GVAGQSVTVTAFVAMFASLFI). Residues 76–85 (TQTIQATDRR) are Cytoplasmic-facing. The chain crosses the membrane as a helical span at residues 86 to 106 (YVVILFAVLLTLSCLLVSFAN). Serine 107 is a topological domain (periplasmic). A helical membrane pass occupies residues 108–128 (FSLLLIGRACLGLALGGFWAM). Over 129-147 (SASLTMRLVPPRTVPKALS) the chain is Cytoplasmic. The chain crosses the membrane as a helical span at residues 148–168 (VIFGAVSIALVIAAPLGSFLG). At 169-175 (ELIGWRN) the chain is on the periplasmic side. Residues 176–196 (VFNAAAAMGVLCIFWIIKSLP) traverse the membrane as a helical segment. Residues 197-215 (SLPGEPSHQKQNTFRLLQR) are Cytoplasmic-facing. Residues 216–236 (PGVMAGMIAIFMSFAGQFAFF) traverse the membrane as a helical segment. At 237 to 255 (TYIRPVYMNLAGFGVDGLT) the chain is on the periplasmic side. Residues 256–276 (LVLLSFGIASFVGTSLSSFIL) traverse the membrane as a helical segment. The Cytoplasmic portion of the chain corresponds to 277-281 (KRSVK). Residues 282–302 (LALAGAPFVLALSALVLTLWG) traverse the membrane as a helical segment. Residues 303–305 (SYK) are Periplasmic-facing. A helical membrane pass occupies residues 306–326 (IVATGVAIIWGLTFALIPVGW). At 327 to 343 (STWITRSLADQAEKAGS) the chain is on the cytoplasmic side. The chain crosses the membrane as a helical span at residues 344–364 (IQVAVIQLANTCGAAIGGYAL). Over 365–366 (DN) the chain is Periplasmic. A helical transmembrane segment spans residues 367 to 387 (IGLTSPLMLSGTLMLLTALLV). Over 388–396 (TAKVKMKKS) the chain is Cytoplasmic.

This sequence belongs to the major facilitator superfamily. DHA1 family. NepI (TC 2.A.1.2.26) subfamily.

The protein resides in the cell inner membrane. It catalyses the reaction inosine(in) + H(+)(out) = inosine(out) + H(+)(in). The enzyme catalyses guanosine(in) + H(+)(out) = guanosine(out) + H(+)(in). Functionally, involved in the efflux of purine ribonucleosides, such as inosine and guanosine. The protein is Purine ribonucleoside efflux pump NepI of Escherichia coli O6:H1 (strain CFT073 / ATCC 700928 / UPEC).